Here is a 283-residue protein sequence, read N- to C-terminus: Ribosomal RNA small subunit methyltransferase A (283 aa).

Residues Asn22, Leu24, Gly49, Glu70, and Asn113 each coordinate S-adenosyl-L-methionine.

It belongs to the class I-like SAM-binding methyltransferase superfamily. rRNA adenine N(6)-methyltransferase family. RsmA subfamily.

The protein resides in the cytoplasm. It carries out the reaction adenosine(1518)/adenosine(1519) in 16S rRNA + 4 S-adenosyl-L-methionine = N(6)-dimethyladenosine(1518)/N(6)-dimethyladenosine(1519) in 16S rRNA + 4 S-adenosyl-L-homocysteine + 4 H(+). In terms of biological role, specifically dimethylates two adjacent adenosines (A1518 and A1519) in the loop of a conserved hairpin near the 3'-end of 16S rRNA in the 30S particle. May play a critical role in biogenesis of 30S subunits. The sequence is that of Ribosomal RNA small subunit methyltransferase A from Myxococcus xanthus (strain DK1622).